We begin with the raw amino-acid sequence, 203 residues long: Guanylate kinase (203 aa).

Positions 5 to 183 constitute a Guanylate kinase-like domain; sequence GVLYIISAPS…AVEELKSVVV (179 aa). Position 12–19 (12–19) interacts with ATP; it reads APSGAGKT.

Belongs to the guanylate kinase family.

The protein resides in the cytoplasm. The catalysed reaction is GMP + ATP = GDP + ADP. Its function is as follows. Essential for recycling GMP and indirectly, cGMP. The protein is Guanylate kinase of Geobacter metallireducens (strain ATCC 53774 / DSM 7210 / GS-15).